A 426-amino-acid chain; its full sequence is Glutamate-1-semialdehyde 2,1-aminomutase (426 aa).

Residue K265 is modified to N6-(pyridoxal phosphate)lysine.

The protein belongs to the class-III pyridoxal-phosphate-dependent aminotransferase family. HemL subfamily. As to quaternary structure, homodimer. The cofactor is pyridoxal 5'-phosphate.

The protein resides in the cytoplasm. The enzyme catalyses (S)-4-amino-5-oxopentanoate = 5-aminolevulinate. Its pathway is porphyrin-containing compound metabolism; protoporphyrin-IX biosynthesis; 5-aminolevulinate from L-glutamyl-tRNA(Glu): step 2/2. The sequence is that of Glutamate-1-semialdehyde 2,1-aminomutase from Escherichia coli O9:H4 (strain HS).